We begin with the raw amino-acid sequence, 632 residues long: Probable extracellular metalloproteinase 2 (632 aa).

An N-terminal signal peptide occupies residues 1–19 (MHGLLLAGLAAALPLGVAG). Positions 20–244 (LPARQQSGLS…VHNVVDYVAS (225 aa)) are excised as a propeptide. N-linked (GlcNAc...) asparagine glycosylation is found at asparagine 81 and asparagine 270. Histidine 429 is a Zn(2+) binding site. Glutamate 430 is an active-site residue. Histidine 433 lines the Zn(2+) pocket.

It belongs to the peptidase M36 family. The cofactor is Zn(2+).

The protein localises to the secreted. Functionally, secreted metalloproteinase probably acting as a virulence factor. This is Probable extracellular metalloproteinase 2 (MEP2) from Arthroderma benhamiae (strain ATCC MYA-4681 / CBS 112371) (Trichophyton mentagrophytes).